A 406-amino-acid chain; its full sequence is Protease ElaD (406 aa).

The active site involves His234. Residue Cys316 is the Nucleophile of the active site.

Belongs to the peptidase C79 family.

Functionally, protease that can act as an efficient and specific deubiquitinating enzyme in vitro. Does not possess desumoylating and deneddylating activities. The physiological substrate is unknown. The sequence is that of Protease ElaD (elaD) from Escherichia coli O139:H28 (strain E24377A / ETEC).